We begin with the raw amino-acid sequence, 291 residues long: HTH-type transcriptional regulator DgcR (291 aa).

The HTH lysR-type domain maps to 1-58; the sequence is MRLRHIEVFHAIYTTGSITNAAKALHVSQPSVSKVLSHAEMQLGFKLFERVKGRLIPT. A DNA-binding region (H-T-H motif) is located at residues 18–37; it reads ITNAAKALHVSQPSVSKVLS.

Belongs to the LysR transcriptional regulatory family.

Functionally, transcriptional regulator that positively regulates the expression of the D-Glu gene cluster (DGC). The cluster includes dgcN and dgcA, which are involved in a deamination-independent D-glutamate degradation pathway, dgcR itself, dgcT, dgcP and dgcH. Acts by binding the consensus sequence upstream of dgcR, dgcT, dgcP and dgcH. This chain is HTH-type transcriptional regulator DgcR, found in Pseudoalteromonas sp.